Here is a 1434-residue protein sequence, read N- to C-terminus: DNA-directed RNA polymerase subunit beta (1434 aa).

It belongs to the RNA polymerase beta chain family. The RNAP catalytic core consists of 2 alpha, 1 beta, 1 beta' and 1 omega subunit. When a sigma factor is associated with the core the holoenzyme is formed, which can initiate transcription.

The enzyme catalyses RNA(n) + a ribonucleoside 5'-triphosphate = RNA(n+1) + diphosphate. DNA-dependent RNA polymerase catalyzes the transcription of DNA into RNA using the four ribonucleoside triphosphates as substrates. This is DNA-directed RNA polymerase subunit beta from Ureaplasma urealyticum serovar 10 (strain ATCC 33699 / Western).